Reading from the N-terminus, the 185-residue chain is Elongation factor P (185 aa).

It belongs to the elongation factor P family.

Its subcellular location is the cytoplasm. Its pathway is protein biosynthesis; polypeptide chain elongation. In terms of biological role, involved in peptide bond synthesis. Stimulates efficient translation and peptide-bond synthesis on native or reconstituted 70S ribosomes in vitro. Probably functions indirectly by altering the affinity of the ribosome for aminoacyl-tRNA, thus increasing their reactivity as acceptors for peptidyl transferase. The protein is Elongation factor P of Synechococcus sp. (strain JA-3-3Ab) (Cyanobacteria bacterium Yellowstone A-Prime).